The sequence spans 237 residues: tRNA (guanine-N(1)-)-methyltransferase (237 aa).

S-adenosyl-L-methionine-binding positions include Gly-113 and 133–138 (MGDYIL).

The protein belongs to the RNA methyltransferase TrmD family. Homodimer.

The protein localises to the cytoplasm. It catalyses the reaction guanosine(37) in tRNA + S-adenosyl-L-methionine = N(1)-methylguanosine(37) in tRNA + S-adenosyl-L-homocysteine + H(+). Functionally, specifically methylates guanosine-37 in various tRNAs. The protein is tRNA (guanine-N(1)-)-methyltransferase of Wolinella succinogenes (strain ATCC 29543 / DSM 1740 / CCUG 13145 / JCM 31913 / LMG 7466 / NCTC 11488 / FDC 602W) (Vibrio succinogenes).